The primary structure comprises 255 residues: Thiazole synthase (255 aa).

The Schiff-base intermediate with DXP role is filled by Lys-96. 1-deoxy-D-xylulose 5-phosphate is bound by residues Gly-157, Ala-183–Gly-184, and Asn-205–Ser-206.

This sequence belongs to the ThiG family. In terms of assembly, homotetramer. Forms heterodimers with either ThiH or ThiS.

It localises to the cytoplasm. It carries out the reaction [ThiS sulfur-carrier protein]-C-terminal-Gly-aminoethanethioate + 2-iminoacetate + 1-deoxy-D-xylulose 5-phosphate = [ThiS sulfur-carrier protein]-C-terminal Gly-Gly + 2-[(2R,5Z)-2-carboxy-4-methylthiazol-5(2H)-ylidene]ethyl phosphate + 2 H2O + H(+). The protein operates within cofactor biosynthesis; thiamine diphosphate biosynthesis. Catalyzes the rearrangement of 1-deoxy-D-xylulose 5-phosphate (DXP) to produce the thiazole phosphate moiety of thiamine. Sulfur is provided by the thiocarboxylate moiety of the carrier protein ThiS. In vitro, sulfur can be provided by H(2)S. This is Thiazole synthase from Exiguobacterium sibiricum (strain DSM 17290 / CCUG 55495 / CIP 109462 / JCM 13490 / 255-15).